The chain runs to 138 residues: Cysteine desulfuration protein SufE (138 aa).

The active-site Cysteine persulfide intermediate is Cys51.

This sequence belongs to the SufE family. As to quaternary structure, homodimer. Interacts with SufS.

The protein resides in the cytoplasm. It functions in the pathway cofactor biosynthesis; iron-sulfur cluster biosynthesis. In terms of biological role, participates in cysteine desulfuration mediated by SufS. Cysteine desulfuration mobilizes sulfur from L-cysteine to yield L-alanine and constitutes an essential step in sulfur metabolism for biosynthesis of a variety of sulfur-containing biomolecules. Functions as a sulfur acceptor for SufS, by mediating the direct transfer of the sulfur atom from the S-sulfanylcysteine of SufS, an intermediate product of cysteine desulfuration process. This is Cysteine desulfuration protein SufE from Photorhabdus laumondii subsp. laumondii (strain DSM 15139 / CIP 105565 / TT01) (Photorhabdus luminescens subsp. laumondii).